A 73-amino-acid polypeptide reads, in one-letter code: Antimicrobial peptide lumbricin-PG (73 aa).

Positions 1 to 14 (MLLTISDFLFLSLT) are cleaved as a signal peptide. A disordered region spans residues 25 to 48 (RPWSDRKNNYSGPQFTYPPEKAPP).

The protein localises to the secreted. Functionally, displays antimicrobial activity against the Gram-positive bacterium S.aureus ATCC 2592, the Gram-negative bacteria E.coli ATCC 25922 and P.aeruginosa ATCC 27853, and the fungus C.albicans ATCC 2002. Displays stronger activity against P.aeruginosa and S.aureus than E.coli. Displays very weak hemolytic activity. This Metaphire guillelmi (Earthworm) protein is Antimicrobial peptide lumbricin-PG.